The sequence spans 1057 residues: MPKRNDIKTILVIGSGPIIIGQAAEFDYAGTQACLALKEEGYRVILVNSNPATIMTDKEIADKVYIEPLTHNFIARIIRKEQPDALLPTLGGQTGLNMAIQLHESGVLQDNNVQLLGTELTSIQQAEDREMFRTLMNDLNVPVPESDIVNTVEQAFKFKEQVGYPLIVRPAFTMGGTGGGICHNDEELHEIVSNGLHYSPATQCLLEKSIAGFKEIEYEVMRDKNDNAIVVCNMENIDPVGIHTGDSIVVAPSQTLSDVEYQMLRDVSLKVIRALGIEGGCNVQLALDPHSFDYYIIEVNPRVSRSSALASKATGYPIAKLAAKIAVGLTLDEMLNPITGTSYAAFEPTLDYVISKIPRFPFDKFEKGERELGTQMKATGEVMAIGRTYEESLLKAIRSLEYGVHHLGLPNGESFDLDYIKERISHQDDERLFFIGEAIRRGTTLEEIHNMTQIDYFFLHKFQNIIDIEHQLKEHQGDLEYLKYAKDYGFSDKTIAHRFNMTEEEVYQLRMENDIKPVYKMVDTCAAEFESSTPYYYGTYETENESIVTDKEKILVLGSGPIRIGQGVEFDYATVHAVWAIQKAGYEAIIVNNNPETVSTDFSISDKLYFEPLTEEDVMNIINLEKPKGVVVQFGGQTAINLADKLAKHGVKILGTSLENLNRAEDRKEFEALLRKINVPQPQGKTATSPEEALANAAEIGYPVVVRPSYVLGGRAMEIVDNDKELENYMTQAVKASPEHPVLVDRYLTGKEIEVDAICDGETVIIPGIMEHIERAGVHSGDSIAVYPPQTLTEDELATLEDYTIKLAKGLNIIGLINIQFVIAHDGVYVLEVNPRSSRTVPFLSKITDIPMAQLAMRAIIGEKLTDMGYQEGVQPYAEGVFVKAPVFSFNKLKNVDITLGPEMKSTGEVMGKDTTLEKALFKGLTGSGVEVKDHGTVLMTVSDKDKEEVVKLAQCLNEVGYKILATSGTANKLAEYDIPAEVVGKIGGENDLLTRIQNGDVQIVINTMTKGKEVERDGFQIRRTTVENGIPCLTSLDTANALTNVIESMTFTMRQM.

Residues 1–401 (MPKRNDIKTI…SLLKAIRSLE (401 aa)) form a carboxyphosphate synthetic domain region. Positions 129, 169, 175, 176, 208, 210, 215, 241, 242, 243, 284, and 298 each coordinate ATP. One can recognise an ATP-grasp 1 domain in the interval 133–327 (RTLMNDLNVP…IAKLAAKIAV (195 aa)). 3 residues coordinate Mg(2+): glutamine 284, glutamate 298, and asparagine 300. Residues glutamine 284, glutamate 298, and asparagine 300 each contribute to the Mn(2+) site. Positions 402 to 546 (YGVHHLGLPN…YGTYETENES (145 aa)) are oligomerization domain. The interval 547 to 929 (IVTDKEKILV…ALFKGLTGSG (383 aa)) is carbamoyl phosphate synthetic domain. Residues 671 to 861 (EALLRKINVP…MAQLAMRAII (191 aa)) enclose the ATP-grasp 2 domain. Residues arginine 707, arginine 746, leucine 748, glutamate 752, glycine 777, valine 778, histidine 779, serine 780, glutamine 820, and glutamate 832 each coordinate ATP. Residues glutamine 820, glutamate 832, and asparagine 834 each coordinate Mg(2+). Mn(2+)-binding residues include glutamine 820, glutamate 832, and asparagine 834. The MGS-like domain maps to 930 to 1057 (VEVKDHGTVL…ESMTFTMRQM (128 aa)). The segment at 930-1057 (VEVKDHGTVL…ESMTFTMRQM (128 aa)) is allosteric domain.

This sequence belongs to the CarB family. Composed of two chains; the small (or glutamine) chain promotes the hydrolysis of glutamine to ammonia, which is used by the large (or ammonia) chain to synthesize carbamoyl phosphate. Tetramer of heterodimers (alpha,beta)4. Mg(2+) is required as a cofactor. The cofactor is Mn(2+).

The enzyme catalyses hydrogencarbonate + L-glutamine + 2 ATP + H2O = carbamoyl phosphate + L-glutamate + 2 ADP + phosphate + 2 H(+). The catalysed reaction is hydrogencarbonate + NH4(+) + 2 ATP = carbamoyl phosphate + 2 ADP + phosphate + 2 H(+). The protein operates within amino-acid biosynthesis; L-arginine biosynthesis; carbamoyl phosphate from bicarbonate: step 1/1. It participates in pyrimidine metabolism; UMP biosynthesis via de novo pathway; (S)-dihydroorotate from bicarbonate: step 1/3. Functionally, large subunit of the glutamine-dependent carbamoyl phosphate synthetase (CPSase). CPSase catalyzes the formation of carbamoyl phosphate from the ammonia moiety of glutamine, carbonate, and phosphate donated by ATP, constituting the first step of 2 biosynthetic pathways, one leading to arginine and/or urea and the other to pyrimidine nucleotides. The large subunit (synthetase) binds the substrates ammonia (free or transferred from glutamine from the small subunit), hydrogencarbonate and ATP and carries out an ATP-coupled ligase reaction, activating hydrogencarbonate by forming carboxy phosphate which reacts with ammonia to form carbamoyl phosphate. The polypeptide is Carbamoyl phosphate synthase large chain (Staphylococcus aureus (strain MRSA252)).